A 490-amino-acid polypeptide reads, in one-letter code: Subtilisin-like protease 8 (490 aa).

The first 26 residues, 1 to 26 (MKGLLSLSVLPVLAYASPMIVDSIHQ), serve as a signal peptide directing secretion. Residues 27–134 (NAAPILSSTN…YIERDSEVHT (108 aa)) constitute a propeptide that is removed on maturation. The Inhibitor I9 domain maps to 43 to 134 (SYIVVFKKGV…YIERDSEVHT (92 aa)). The Peptidase S8 domain maps to 144–450 (PWGLARISHR…GGSDDYKKII (307 aa)). Residues Asp-180 and His-212 each act as charge relay system in the active site. N-linked (GlcNAc...) asparagine glycosylation occurs at Asn-282. Ser-378 functions as the Charge relay system in the catalytic mechanism. An N-linked (GlcNAc...) asparagine glycan is attached at Asn-456.

The protein belongs to the peptidase S8 family.

The protein resides in the secreted. Secreted subtilisin-like serine protease with keratinolytic activity that contributes to pathogenicity. This Trichophyton verrucosum (strain HKI 0517) protein is Subtilisin-like protease 8 (SUB8).